A 184-amino-acid polypeptide reads, in one-letter code: Large ribosomal subunit protein uL5 (184 aa).

Belongs to the universal ribosomal protein uL5 family. As to quaternary structure, part of the 50S ribosomal subunit; part of the 5S rRNA/L5/L18/L25 subcomplex. Contacts the 5S rRNA and the P site tRNA. Forms a bridge to the 30S subunit in the 70S ribosome.

Functionally, this is one of the proteins that bind and probably mediate the attachment of the 5S RNA into the large ribosomal subunit, where it forms part of the central protuberance. In the 70S ribosome it contacts protein S13 of the 30S subunit (bridge B1b), connecting the 2 subunits; this bridge is implicated in subunit movement. Contacts the P site tRNA; the 5S rRNA and some of its associated proteins might help stabilize positioning of ribosome-bound tRNAs. The sequence is that of Large ribosomal subunit protein uL5 from Fervidobacterium nodosum (strain ATCC 35602 / DSM 5306 / Rt17-B1).